Reading from the N-terminus, the 353-residue chain is Methionine import ATP-binding protein MetN (353 aa).

The ABC transporter domain maps to 7–249 (LENIDVTFKQ…PKEELSRQFV (243 aa)). 41–48 (GYSGAGKS) provides a ligand contact to ATP.

The protein belongs to the ABC transporter superfamily. Methionine importer (TC 3.A.1.24) family. As to quaternary structure, the complex is composed of two ATP-binding proteins (MetN), two transmembrane proteins (MetI) and a solute-binding protein (MetQ).

It localises to the cell membrane. The enzyme catalyses L-methionine(out) + ATP + H2O = L-methionine(in) + ADP + phosphate + H(+). The catalysed reaction is D-methionine(out) + ATP + H2O = D-methionine(in) + ADP + phosphate + H(+). Functionally, part of the ABC transporter complex MetNIQ involved in methionine import. Responsible for energy coupling to the transport system. The polypeptide is Methionine import ATP-binding protein MetN (Ligilactobacillus salivarius (strain UCC118) (Lactobacillus salivarius)).